Here is a 530-residue protein sequence, read N- to C-terminus: Glucose-6-phosphate isomerase (530 aa).

Residue glutamate 356 is the Proton donor of the active site. Catalysis depends on residues histidine 387 and lysine 502.

This sequence belongs to the GPI family.

It localises to the cytoplasm. It carries out the reaction alpha-D-glucose 6-phosphate = beta-D-fructose 6-phosphate. Its pathway is carbohydrate biosynthesis; gluconeogenesis. The protein operates within carbohydrate degradation; glycolysis; D-glyceraldehyde 3-phosphate and glycerone phosphate from D-glucose: step 2/4. Its function is as follows. Catalyzes the reversible isomerization of glucose-6-phosphate to fructose-6-phosphate. This Borreliella afzelii (strain PKo) (Borrelia afzelii) protein is Glucose-6-phosphate isomerase.